An 86-amino-acid chain; its full sequence is MNILFVLSSVPHTSPWSTQVAMVMITCNLLAIVAGRYAIKVRGLGPSIPVSGVEGFGLPELLATTSLGHVIGAASILGLSNVGLIS.

The helical transmembrane segment at 15-34 (PWSTQVAMVMITCNLLAIVA) threads the bilayer.

This sequence belongs to the PsaG/PsaK family.

It localises to the plastid. Its subcellular location is the chloroplast thylakoid membrane. In Pyropia yezoensis (Susabi-nori), this protein is Photosystem I reaction center subunit PsaK.